The following is a 336-amino-acid chain: Vacuolar protein sorting-associated protein 26B (336 aa).

Residues Ser302, Ser304, and Ser319 each carry the phosphoserine modification.

This sequence belongs to the VPS26 family. As to quaternary structure, component of the heterotrimeric retromer cargo-selective complex (CSC), also described as vacuolar protein sorting subcomplex (VPS), formed by VPS26 (VPS26A or VPS26B), VPS29 and VPS35. The CSC has a highly elongated structure with VPS26 and VPS29 binding independently at opposite distal ends of VPS35 as central platform. The CSC is believed to associate with variable sorting nexins to form functionally distinct retromer complex variants. The originally described SNX-BAR retromer is a pentamer containing the CSC and a heterodimeric membrane-deforming subcomplex formed between SNX1 or SNX2 and SNX5 or SNX6 (also called SNX-BAR subcomplex); the respective CSC and SNX-BAR subcomplexes associate with low affinity. The CSC associates with SNX3 to form a SNX3-retromer complex. The CSC associates with SNX27, the WASH complex and the SNX-BAR subcomplex to form the SNX27-retromer complex. Interacts with VPS29, VPS35, TBC1D5, GOLPH3, SNX27. In terms of tissue distribution, ubiquitously expressed in developing embryo and adult. Highly expressed in brain.

Its subcellular location is the cytoplasm. The protein resides in the membrane. It is found in the early endosome. It localises to the late endosome. In terms of biological role, acts as a component of the retromer cargo-selective complex (CSC). The CSC is believed to be the core functional component of retromer or respective retromer complex variants acting to prevent missorting of selected transmembrane cargo proteins into the lysosomal degradation pathway. The recruitment of the CSC to the endosomal membrane involves RAB7A and SNX3. The SNX-BAR retromer mediates retrograde transport of cargo proteins from endosomes to the trans-Golgi network (TGN) and is involved in endosome-to-plasma membrane transport for cargo protein recycling. The SNX3-retromer mediates the retrograde transport of WLS distinct from the SNX-BAR retromer pathway. The SNX27-retromer is believed to be involved in endosome-to-plasma membrane trafficking and recycling of a broad spectrum of cargo proteins. The CSC seems to act as recruitment hub for other proteins, such as the WASH complex and TBC1D5. May be involved in retrograde transport of SORT1 but not of IGF2R. Acts redundantly with VSP26A in SNX-27 mediated endocytic recycling of SLC2A1/GLUT1. The protein is Vacuolar protein sorting-associated protein 26B (Vps26b) of Mus musculus (Mouse).